The primary structure comprises 439 residues: MTISKVHSRYVYDSRGNPTVEVDVTTENGLFRAIVPSGASTGINEAMELRDGDKSKWQGKGVTKAVDNVNKTIAPHLIKSGLDEKNQEEIDSFLLKLDGTPNKRSLGANAILGVSLAVAKAGAAAKQVPLYRHIADISKSKQDKYVLPVPFQNVLNGGSHAGGSLAFQEFMIAPTNAPSFSEALRIGSEVYHHLKSLTKSKYGQSAGNVGDEGGVAPDIETPEEALDLIVASIEKAGYKGKVSIALDVASSEFYKDGKYDLDFKNPNSDKSKWLSGDQLADLYESLIDNYPIISIEDPFSEEDWDAWSNFYPKVASKLQIVGDDLTVTNPIFIKKAIEKKAANALLLKVNQIGTLTESIKAAQLAFSDKWGVMVSHRSGETEDHIIADIVVGLRTGQIKTGAPSRSERLAKLNQILRIEQELGDDAVYSGKGFHTAQNL.

Residues His-160 and Glu-169 each coordinate substrate. Glu-212 functions as the Proton donor in the catalytic mechanism. Mg(2+) contacts are provided by Asp-247, Glu-296, and Asp-323. 2 residues coordinate substrate: Glu-296 and Asp-323. Lys-348 (proton acceptor) is an active-site residue. Substrate-binding positions include 375-378 (SHRS) and Lys-399.

It belongs to the enolase family. In terms of assembly, homodimer. Mg(2+) is required as a cofactor.

The protein localises to the cytoplasm. The catalysed reaction is (2R)-2-phosphoglycerate = phosphoenolpyruvate + H2O. The protein operates within carbohydrate degradation; glycolysis; pyruvate from D-glyceraldehyde 3-phosphate: step 4/5. This is Enolase 1 (ENO1) from Debaryomyces hansenii (strain ATCC 36239 / CBS 767 / BCRC 21394 / JCM 1990 / NBRC 0083 / IGC 2968) (Yeast).